A 48-amino-acid chain; its full sequence is Glycine-rich RNA-binding protein 3 (48 aa).

The protein is Glycine-rich RNA-binding protein 3 of Populus euphratica (Euphrates poplar).